The chain runs to 975 residues: Glycine dehydrogenase (decarboxylating) (975 aa).

N6-(pyridoxal phosphate)lysine is present on Lys-702.

It belongs to the GcvP family. The glycine cleavage system is composed of four proteins: P, T, L and H. Requires pyridoxal 5'-phosphate as cofactor.

It catalyses the reaction N(6)-[(R)-lipoyl]-L-lysyl-[glycine-cleavage complex H protein] + glycine + H(+) = N(6)-[(R)-S(8)-aminomethyldihydrolipoyl]-L-lysyl-[glycine-cleavage complex H protein] + CO2. Functionally, the glycine cleavage system catalyzes the degradation of glycine. The P protein binds the alpha-amino group of glycine through its pyridoxal phosphate cofactor; CO(2) is released and the remaining methylamine moiety is then transferred to the lipoamide cofactor of the H protein. This is Glycine dehydrogenase (decarboxylating) from Xanthomonas campestris pv. campestris (strain 8004).